Consider the following 430-residue polypeptide: 3-phosphoshikimate 1-carboxyvinyltransferase (430 aa).

3 residues coordinate 3-phosphoshikimate: K25, S26, and R30. K25 contacts phosphoenolpyruvate. 2 residues coordinate phosphoenolpyruvate: G97 and R125. 4 residues coordinate 3-phosphoshikimate: S170, Q172, D318, and K345. Q172 lines the phosphoenolpyruvate pocket. The active-site Proton acceptor is the D318. The phosphoenolpyruvate site is built by R349 and R391.

The protein belongs to the EPSP synthase family. Monomer.

The protein localises to the cytoplasm. The catalysed reaction is 3-phosphoshikimate + phosphoenolpyruvate = 5-O-(1-carboxyvinyl)-3-phosphoshikimate + phosphate. It functions in the pathway metabolic intermediate biosynthesis; chorismate biosynthesis; chorismate from D-erythrose 4-phosphate and phosphoenolpyruvate: step 6/7. Its function is as follows. Catalyzes the transfer of the enolpyruvyl moiety of phosphoenolpyruvate (PEP) to the 5-hydroxyl of shikimate-3-phosphate (S3P) to produce enolpyruvyl shikimate-3-phosphate and inorganic phosphate. This Shouchella clausii (strain KSM-K16) (Alkalihalobacillus clausii) protein is 3-phosphoshikimate 1-carboxyvinyltransferase.